Here is a 333-residue protein sequence, read N- to C-terminus: Adenosine deaminase (333 aa).

Positions 12 and 14 each coordinate Zn(2+). The substrate site is built by histidine 14, aspartate 16, and glycine 170. Histidine 197 provides a ligand contact to Zn(2+). Catalysis depends on glutamate 200, which acts as the Proton donor. Aspartate 278 serves as a coordination point for Zn(2+). Aspartate 279 serves as a coordination point for substrate.

It belongs to the metallo-dependent hydrolases superfamily. Adenosine and AMP deaminases family. Adenosine deaminase subfamily. Requires Zn(2+) as cofactor.

It catalyses the reaction adenosine + H2O + H(+) = inosine + NH4(+). The enzyme catalyses 2'-deoxyadenosine + H2O + H(+) = 2'-deoxyinosine + NH4(+). Its function is as follows. Catalyzes the hydrolytic deamination of adenosine and 2-deoxyadenosine. The chain is Adenosine deaminase from Salmonella typhi.